A 275-amino-acid chain; its full sequence is Autophagy protein 5 (275 aa).

At M1 the chain carries N-acetylmethionine. K130 is covalently cross-linked (Glycyl lysine isopeptide (Lys-Gly) (interchain with G-Cter in ATG12)).

This sequence belongs to the ATG5 family. Forms a conjugate with ATG12. Part of the minor complex composed of 4 sets of ATG12-ATG5 and ATG16L1 (400 kDa); this complex interacts with ATG3 leading to disruption of ATG7 interaction and promotion of ATG8-like proteins lipidation. Forms an 800-kDa complex composed of ATG12-ATG5 and ATG16L2. The ATG12-ATG5 conjugate interacts with RAB33A; this interaction is bridged by ATG16L1 and promotes ATG12-ATG5-ATG16L1 complex recruitment to phagophores. Interacts with TECPR1; the interaction is direct and does not take place when ATG16L1 is associated with the ATG5-ATG12 conjugate. Interacts with DHX58/RIG-1, IFIH1/MDA5 and MAVS/IPS-1 in monomeric form as well as in ATG12-ATG5 conjugate form. The interaction with MAVS is further enhanced upon vesicular stomatitis virus (VSV) infection. Interacts with ATG3. Interacts with ATG7 and ATG10. Interacts with FADD. Interacts with Bassoon/BSN; this interaction is important for the regulation of presynaptic autophagy. Interacts with ATG16L2. Conjugated to ATG12; which is essential for autophagy, but is not required for association with isolation membrane. Post-translationally, acetylated by EP300.

The protein localises to the cytoplasm. Its subcellular location is the preautophagosomal structure membrane. Its function is as follows. Involved in autophagic vesicle formation. Conjugation with ATG12, through a ubiquitin-like conjugating system involving ATG7 as an E1-like activating enzyme and ATG10 as an E2-like conjugating enzyme, is essential for its function. The ATG12-ATG5 conjugate acts as an E3-like enzyme which is required for lipidation of ATG8 family proteins and their association to the vesicle membranes. Involved in mitochondrial quality control after oxidative damage, and in subsequent cellular longevity. Plays a critical role in multiple aspects of lymphocyte development and is essential for both B and T lymphocyte survival and proliferation. Required for optimal processing and presentation of antigens for MHC II. Involved in the maintenance of axon morphology and membrane structures, as well as in normal adipocyte differentiation. Promotes primary ciliogenesis through removal of OFD1 from centriolar satellites and degradation of IFT20 via the autophagic pathway. As part of the ATG8 conjugation system with ATG12 and ATG16L1, required for recruitment of LRRK2 to stressed lysosomes and induction of LRRK2 kinase activity in response to lysosomal stress. May play an important role in the apoptotic process, possibly within the modified cytoskeleton. Its expression is a relatively late event in the apoptotic process, occurring downstream of caspase activity. Plays a crucial role in IFN-gamma-induced autophagic cell death by interacting with FADD. This Sus scrofa (Pig) protein is Autophagy protein 5.